Reading from the N-terminus, the 527-residue chain is Bifunctional purine biosynthesis protein PurH (527 aa).

Residues 1-149 form the MGS-like domain; the sequence is MASDFLPVHR…KNFARVAVAT (149 aa).

This sequence belongs to the PurH family.

It catalyses the reaction (6R)-10-formyltetrahydrofolate + 5-amino-1-(5-phospho-beta-D-ribosyl)imidazole-4-carboxamide = 5-formamido-1-(5-phospho-D-ribosyl)imidazole-4-carboxamide + (6S)-5,6,7,8-tetrahydrofolate. The catalysed reaction is IMP + H2O = 5-formamido-1-(5-phospho-D-ribosyl)imidazole-4-carboxamide. It functions in the pathway purine metabolism; IMP biosynthesis via de novo pathway; 5-formamido-1-(5-phospho-D-ribosyl)imidazole-4-carboxamide from 5-amino-1-(5-phospho-D-ribosyl)imidazole-4-carboxamide (10-formyl THF route): step 1/1. It participates in purine metabolism; IMP biosynthesis via de novo pathway; IMP from 5-formamido-1-(5-phospho-D-ribosyl)imidazole-4-carboxamide: step 1/1. The chain is Bifunctional purine biosynthesis protein PurH from Xylella fastidiosa (strain 9a5c).